The primary structure comprises 821 residues: MATSEEPSTDASIICYAPSMITTNGVWQGDNPLDFSLPLFVLQLTLVVVVTRFFVFILKPFRQPRVISEILGGIVLGPSVLGRSTKFAHTIFPQRSVMVLETMANVGLLYFLFLVGVEMDIMVVRKTGKRALTIAIGGMVLPFLIGAAFSFSMHRSEDHLGQGTYILFLGVALSVTAFPVLARILAELKLINTEIGRISMSAALVNDMFAWILLALAIALAESDKTSFASLWVMISSAVFIAVCVFVVRPGIAWIIRKTPEGENFSEFHICLILTGVMISGFITDAIGTHSVFGAFVFGLVIPNGPLGLTLIEKLEDFVSGLLLPLFFAISGLKTNIAAIQGPATWLTLFLVIFLACAGKVIGTVIVAFFHGMPVREGITLGLLLNTKGLVEMIVLNVGKDQKVLDDETFATMVLVALVMTGVITPIVTILYKPVKKSVSYKRRTIQQTKPDSELRVLVCVHTPRNVPTIINLLEASHPTKRSPICIYVLHLVELTGRASAMLIVHNTRKSGRPALNRTQAQSDHIINAFENYEQHAAFVAVQPLTAISPYSTMHEDVCSLAEDKRVSFIIIPFHKQQTVDGGMESTNPAYRLVNQNLLENSPCSVGILVDRGLNGATRLNSNTVSLQVAVLFFGGPDDREALAYAWRMAQHPGITLTVLRFIHDEDEADTASTRATNDSDLKIPKMDHRKQRQLDDDYINLFRAENAEYESIVYIEKLVSNGEETVAAVRSMDSSHDLFIVGRGEGMSSPLTAGLTDWSECPELGAIGDLLASSDFAATVSVLVVQQYVGSWAQEDDMDFPESPVHSHETKVTYGLENPR.

13 consecutive transmembrane segments (helical) span residues 37-57, 65-82, 97-117, 131-151, 166-186, 200-220, 228-248, 268-288, 292-312, 318-338, 350-370, 378-398, and 410-430; these read LPLF…FVFI, RVIS…SVLG, VMVL…LVGV, ALTI…AFSF, ILFL…RILA, MSAA…AIAL, FASL…VFVV, FHIC…DAIG, VFGA…LTLI, FVSG…TNIA, FLVI…VAFF, GITL…VLNV, and FATM…IVTI. A disordered region spans residues 800–821; sequence DFPESPVHSHETKVTYGLENPR.

This sequence belongs to the monovalent cation:proton antiporter 2 (CPA2) transporter (TC 2.A.37) family. CHX (TC 2.A.37.4) subfamily. As to expression, specifically expressed in pollen.

The protein localises to the membrane. Its function is as follows. May operate as a cation/H(+) antiporter. The protein is Cation/H(+) antiporter 15 (CHX15) of Arabidopsis thaliana (Mouse-ear cress).